A 431-amino-acid chain; its full sequence is Glutamate-1-semialdehyde 2,1-aminomutase (431 aa).

Lys-266 carries the N6-(pyridoxal phosphate)lysine modification.

Belongs to the class-III pyridoxal-phosphate-dependent aminotransferase family. HemL subfamily. Homodimer. It depends on pyridoxal 5'-phosphate as a cofactor.

It localises to the cytoplasm. It catalyses the reaction (S)-4-amino-5-oxopentanoate = 5-aminolevulinate. Its pathway is porphyrin-containing compound metabolism; protoporphyrin-IX biosynthesis; 5-aminolevulinate from L-glutamyl-tRNA(Glu): step 2/2. The chain is Glutamate-1-semialdehyde 2,1-aminomutase from Wolinella succinogenes (strain ATCC 29543 / DSM 1740 / CCUG 13145 / JCM 31913 / LMG 7466 / NCTC 11488 / FDC 602W) (Vibrio succinogenes).